We begin with the raw amino-acid sequence, 702 residues long: Rho GTPase-activating protein 22 (702 aa).

Residues 43–151 (PVLKAGWLRK…WVQAIRRVIW (109 aa)) enclose the PH domain. Positions 161-355 (QRLEDTVHHE…VLIRKHGQLF (195 aa)) constitute a Rho-GAP domain. Disordered regions lie at residues 360–433 (LEEP…HTLP), 438–457 (SFRQ…SSLE), 480–511 (RASS…FSST), and 555–596 (PSPL…TQAH). Residues Ser-365 and Ser-397 each carry the phosphoserine modification. Polar residues-rich tracts occupy residues 407–421 (SRTS…TGPA), 438–456 (SFRQ…NSSL), 491–504 (GSAQ…NVPP), and 581–594 (SGSS…SPTQ). Residues 594-691 (QAHVRRCRAL…EEFFSTLGSL (98 aa)) are a coiled coil.

Interacts with VEZF1. As to expression, predominantly present in endothelial cells (at protein level).

Its subcellular location is the cytoplasm. The protein resides in the nucleus. Functionally, rho GTPase-activating protein involved in the signal transduction pathway that regulates endothelial cell capillary tube formation during angiogenesis. Acts as a GTPase activator for the RAC1 by converting it to an inactive GDP-bound state. Inhibits RAC1-dependent lamellipodia formation. May also play a role in transcription regulation via its interaction with VEZF1, by regulating activity of the endothelin-1 (EDN1) promoter. The protein is Rho GTPase-activating protein 22 (Arhgap22) of Mus musculus (Mouse).